We begin with the raw amino-acid sequence, 117 residues long: Photosystem II reaction center Psb28 protein (117 aa).

Belongs to the Psb28 family. Part of the photosystem II complex.

The protein localises to the cellular thylakoid membrane. In Prochlorococcus marinus (strain MIT 9312), this protein is Photosystem II reaction center Psb28 protein.